The sequence spans 495 residues: MTTDNAKAQLTSSSGGNIIVVSNRLPVTITKNSSTGQYEYAMSSGGLVTALEGLKKTYTFKWFGWPGLEIPDDEKDQVRKDLLEKFNAVPIFLSDEIADLHYNGFSNSILWPLFHYHPGEINFDENAWLAYNEANQTFTNEIAKTMNHNDLIWVHDYHLMLVPEMLRVKIHEKQLQNVKVGWFLHTPFPSSEIYRILPVRQEILKGVLSCDLVGFHTYDYARHFLSSVQRVLNVNTLPNGVEYQGRFVNVGAFPIGIDVDKFTDGLKKESVQKRIQQLKETFKGCKIIVGVDRLDYIKGVPQKLHAMEVFLNEHPEWRGKVVLVQVAVPSRGDVEEYQYLRSVVNELVGRINGQFGTVEFVPIHFMHKSIPFEELISLYAVSDVCLVSSTRDGMNLVSYEYIACQEEKKGSLILSEFTGAAQSLNGAIIVNPWNTDDLSDAINEALTLPDVKKEVNWEKLYKYISKYTSAFWGENFVHELYSTSSSSTSSSATKN.

Positions 102 and 156 each coordinate D-glucose 6-phosphate. The UDP site is built by Arg293 and Lys298. UDP-alpha-D-glucose is bound by residues Arg293 and Lys298. Residue Arg331 coordinates D-glucose 6-phosphate. UDP contacts are provided by residues Ile370 and 396 to 400 (LVSYE). UDP-alpha-D-glucose contacts are provided by residues Ile370 and 392–400 (DGMNLVSYE).

The protein belongs to the glycosyltransferase 20 family. As to quaternary structure, the trehalose synthase complex is composed of the two catalytic subunits TPS1 and TPS2 and at least one of the two regulatory subunits TPS3 or TSL1.

It localises to the cytoplasm. The catalysed reaction is D-glucose 6-phosphate + UDP-alpha-D-glucose = alpha,alpha-trehalose 6-phosphate + UDP + H(+). The protein operates within carbohydrate biosynthesis. Activated by fructose 6-phosphate. Inorganic phosphate inhibits the synthase activity in the complex, but activates the synthase activity in the free monomeric form. Functionally, synthase catalytic subunit of the trehalose synthase complex that catalyzes the production of trehalose from glucose-6-phosphate and UDP-alpha-D-glucose in a two step process. Can function independently of the complex. The sequence is that of Alpha,alpha-trehalose-phosphate synthase [UDP-forming] 56 kDa subunit from Saccharomyces cerevisiae (strain ATCC 204508 / S288c) (Baker's yeast).